Consider the following 109-residue polypeptide: Nucleoid-associated protein BCB4264_A0025 (109 aa).

It belongs to the YbaB/EbfC family. In terms of assembly, homodimer.

The protein localises to the cytoplasm. Its subcellular location is the nucleoid. In terms of biological role, binds to DNA and alters its conformation. May be involved in regulation of gene expression, nucleoid organization and DNA protection. This is Nucleoid-associated protein BCB4264_A0025 from Bacillus cereus (strain B4264).